Here is a 422-residue protein sequence, read N- to C-terminus: 26S proteasome non-ATPase regulatory subunit 11B (422 aa).

A PCI domain is found at 228 to 392 (AYSYFFEAFE…DVLIIFEEPP (165 aa)).

It belongs to the proteasome subunit S9 family. As to quaternary structure, component of the lid subcomplex of the 19S proteasome regulatory particle complex (also named PA700 complex). The 26S proteasome consists of a 20S proteasome core and two 19S regulatory subunits.

It is found in the nucleus. It localises to the cytoplasm. Its subcellular location is the cytosol. In terms of biological role, component of the lid subcomplex of the 26S proteasome, a multiprotein complex involved in the ATP-dependent degradation of ubiquitinated proteins. In the complex, psmd11b is required for proteasome assembly. The polypeptide is 26S proteasome non-ATPase regulatory subunit 11B (psmd11b) (Danio rerio (Zebrafish)).